Here is a 332-residue protein sequence, read N- to C-terminus: Tetraacyldisaccharide 4'-kinase (332 aa).

60 to 67 provides a ligand contact to ATP; sequence TVGGTGKT.

It belongs to the LpxK family.

It carries out the reaction a lipid A disaccharide + ATP = a lipid IVA + ADP + H(+). It participates in glycolipid biosynthesis; lipid IV(A) biosynthesis; lipid IV(A) from (3R)-3-hydroxytetradecanoyl-[acyl-carrier-protein] and UDP-N-acetyl-alpha-D-glucosamine: step 6/6. Functionally, transfers the gamma-phosphate of ATP to the 4'-position of a tetraacyldisaccharide 1-phosphate intermediate (termed DS-1-P) to form tetraacyldisaccharide 1,4'-bis-phosphate (lipid IVA). The sequence is that of Tetraacyldisaccharide 4'-kinase from Pseudomonas paraeruginosa (strain DSM 24068 / PA7) (Pseudomonas aeruginosa (strain PA7)).